The chain runs to 321 residues: Lipoyl synthase (321 aa).

[4Fe-4S] cluster is bound by residues cysteine 68, cysteine 73, cysteine 79, cysteine 94, cysteine 98, cysteine 101, and serine 308. The 218-residue stretch at 80–297 (FNHGTATFMI…RVFAEEIGFT (218 aa)) folds into the Radical SAM core domain.

It belongs to the radical SAM superfamily. Lipoyl synthase family. [4Fe-4S] cluster is required as a cofactor.

It localises to the cytoplasm. It carries out the reaction [[Fe-S] cluster scaffold protein carrying a second [4Fe-4S](2+) cluster] + N(6)-octanoyl-L-lysyl-[protein] + 2 oxidized [2Fe-2S]-[ferredoxin] + 2 S-adenosyl-L-methionine + 4 H(+) = [[Fe-S] cluster scaffold protein] + N(6)-[(R)-dihydrolipoyl]-L-lysyl-[protein] + 4 Fe(3+) + 2 hydrogen sulfide + 2 5'-deoxyadenosine + 2 L-methionine + 2 reduced [2Fe-2S]-[ferredoxin]. Its pathway is protein modification; protein lipoylation via endogenous pathway; protein N(6)-(lipoyl)lysine from octanoyl-[acyl-carrier-protein]: step 2/2. In terms of biological role, catalyzes the radical-mediated insertion of two sulfur atoms into the C-6 and C-8 positions of the octanoyl moiety bound to the lipoyl domains of lipoate-dependent enzymes, thereby converting the octanoylated domains into lipoylated derivatives. The sequence is that of Lipoyl synthase from Shewanella woodyi (strain ATCC 51908 / MS32).